A 244-amino-acid chain; its full sequence is ATP-dependent Clp protease ATP-binding subunit CLPT4, chloroplastic (244 aa).

The transit peptide at 1-64 directs the protein to the chloroplast; it reads MQALQASRLT…WRSSGRVITR (64 aa). Residues 30 to 48 are compositionally biased toward low complexity; it reads SRPISSGVSSSQELSSRSS. Disordered regions lie at residues 30–55 and 220–244; these read SRPI…TKSW and GRRY…VSFL.

The protein belongs to the ClpA/ClpB family.

It localises to the plastid. The protein localises to the chloroplast. Functionally, accessory protein regulating the assembly of the plastid Clp protease system. The chain is ATP-dependent Clp protease ATP-binding subunit CLPT4, chloroplastic from Chlamydomonas reinhardtii (Chlamydomonas smithii).